Consider the following 637-residue polypeptide: MAEAGQMEKHGFQTEVKQLLHLMIHSLYSNKEIFLRELVSNASDAADKLRFKALSDNSLYGDDSDLHVRVSVDKDSRTITISDNGVGMTRDDVMNNLGTIAKSGTAEFFGQLSGDEAKDSKLIGQFGVGFYSAFIVADEVTVRTRSALDKDARGVEWRSQGEGDFEIADIDKARRGTDIILHLKDDADEFLDENRLRGIINKYSEHLSIPVQMWKEPVPESEDDEGNKVEGQPGEWETVNSGQALWTREKSDITDEEYKEFYKTVAHDFDEPLLWSHNKVEGTTEYTNLLYIPKRAPWDLWNREQQHGVKLYVKRVFIMDDAEQLMPTYLRFVRGLVDSNDLPLNVSREILQDNKITRAMRNGSTKKVLQMLKKLAKDDKEQYQQFWDTFGNVLKEGPAEDHTNRERIAELLRFASTHNDGAVQSVSLDDYIERMKEGQDKIFYIVADSYEAARNNPALEIFNKKGIEVLLLSERIDEWLMSHLTEFKEKQLQSVTRGDLDLGELDDEEDKAEQEKAEEAFKENLERFEKALGDKVKKVRVTNRLTNSPACIITDDNDMSTQMAKLMEAAGQAVPETKYIFEVNPEHPLVQRMLTKEDDTFKEWAEVLLDQATLAERGNLKDPASFVTRLNKLMLNA.

The segment at 1–348 (MAEAGQMEKH…SNDLPLNVSR (348 aa)) is a; substrate-binding. Residues 349 to 565 (EILQDNKITR…DNDMSTQMAK (217 aa)) are b. Residues 566–637 (LMEAAGQAVP…TRLNKLMLNA (72 aa)) are c.

It belongs to the heat shock protein 90 family. In terms of assembly, homodimer.

It is found in the cytoplasm. Molecular chaperone. Has ATPase activity. The sequence is that of Chaperone protein HtpG from Idiomarina loihiensis (strain ATCC BAA-735 / DSM 15497 / L2-TR).